Here is a 1427-residue protein sequence, read N- to C-terminus: Multidrug resistance-associated protein 5 (1427 aa).

The Cytoplasmic segment spans residues 1-147 (MPSDSEEVCL…IYRFISTRLW (147 aa)). A helical transmembrane segment spans residues 148–168 (FSCAVFFFCLIFGFIGPTCFI). The ABC transmembrane type-1 1 domain maps to 151–432 (AVFFFCLIFG…IPYGSRYLAE (282 aa)). Topologically, residues 169-185 (RRLIAFAENPERDEQSR) are extracellular. Residues 186 to 206 (IVYSYGIALVAAISVVEFARV) traverse the membrane as a helical segment. Residues 207–268 (LSYGATWAVS…RLFDAVTFAP (62 aa)) are Cytoplasmic-facing. A helical transmembrane segment spans residues 269 to 289 (LVLVGPLVLVGGIGYLLMVIG). A topological domain (extracellular) is located at residue R290. A helical transmembrane segment spans residues 291 to 311 (WSLLGILVFFVFDVIQFGLGK). Residues 312 to 375 (SMVACRNLAI…RKSGYAQSLA (64 aa)) are Cytoplasmic-facing. The chain crosses the membrane as a helical span at residues 376–396 (IACGPVVPVVAAILTFVGVVL). Over 397-399 (AGN) the chain is Extracellular. Residues 400 to 420 (DLLASDAFSAITVYFVMLFGI) form a helical membrane-spanning segment. Residues 421–770 (RMIPYGSRYL…TIAWRIYKQY (350 aa)) lie on the Cytoplasmic side of the membrane. Residues 486-707 (PTENEVIVVE…NDAYKTFVDA (222 aa)) enclose the ABC transporter 1 domain. 518–525 (GAVGCGKS) is a binding site for ATP. Residues 771-791 (IHAAGGWPIWTCLVIGFIVNV) traverse the membrane as a helical segment. In terms of domain architecture, ABC transmembrane type-1 2 spans 783–1078 (LVIGFIVNVV…AVRTQTELEA (296 aa)). Over 792–833 (VSNIFSTYWLSRWLKKGHDETTTITNGTEFLEMKTSLADSPV) the chain is Extracellular. N817 is a glycosylation site (N-linked (GlcNAc...) asparagine). The chain crosses the membrane as a helical span at residues 834 to 854 (TGFYAAVYLVALVVLTISGLF). The Cytoplasmic portion of the chain corresponds to 855 to 909 (KACVFVKVSLTAATRLHDRMFQAVIHGATSFFDSTPTGRILNRFSKDMDEIDVKL). A helical membrane pass occupies residues 910-930 (PFTAEVFLQNMITCLGFLVVI). Position 931 (T931) is a topological domain, extracellular. A helical membrane pass occupies residues 932–952 (SVFPYFLLFAIPLFVVFVVFV). Residues 953 to 1022 (SCFRAGIRNL…MFQSAMRWLA (70 aa)) are Cytoplasmic-facing. The chain crosses the membrane as a helical span at residues 1023 to 1043 (VWLDLLVVVMTAIVALLTVML). Topologically, residues 1044 to 1049 (TGTVSP) are extracellular. Residues 1050 to 1070 (ADAGMAIAFAVQMSGIFQFAV) traverse the membrane as a helical segment. The Cytoplasmic portion of the chain corresponds to 1071–1427 (RTQTELEAKM…SSDTDIEVVQ (357 aa)). The 235-residue stretch at 1117 to 1351 (INFSEVNLRY…DWSVYKLEDK (235 aa)) folds into the ABC transporter 2 domain. 1151–1158 (GRTGSGKS) lines the ATP pocket. A disordered region spans residues 1361–1427 (VGENSEHSME…SSDTDIEVVQ (67 aa)). Residues 1382-1418 (DIVKVENEQKDSSDDVVHIESGDDDVKADSSEVKETS) are compositionally biased toward basic and acidic residues.

This sequence belongs to the ABC transporter superfamily. ABCC family. Conjugate transporter (TC 3.A.1.208) subfamily. In terms of tissue distribution, highly expressed in the intestine and pharynx. Expressed at low levels in the hypodermis and in some neurons.

The protein localises to the basolateral cell membrane. In terms of biological role, heme transporter required for the export of intestinal heme to different tissues and subcellular compartments. Also, required for the export of vitamin B12 from the intestine of the mother to the embryo to support embryonic development. The chain is Multidrug resistance-associated protein 5 from Caenorhabditis elegans.